A 293-amino-acid polypeptide reads, in one-letter code: 33 kDa chaperonin (293 aa).

Intrachain disulfides connect Cys231–Cys233 and Cys264–Cys267.

The protein belongs to the HSP33 family. In terms of processing, under oxidizing conditions two disulfide bonds are formed involving the reactive cysteines. Under reducing conditions zinc is bound to the reactive cysteines and the protein is inactive.

It is found in the cytoplasm. Redox regulated molecular chaperone. Protects both thermally unfolding and oxidatively damaged proteins from irreversible aggregation. Plays an important role in the bacterial defense system toward oxidative stress. The protein is 33 kDa chaperonin of Yersinia pseudotuberculosis serotype O:1b (strain IP 31758).